The sequence spans 101 residues: Small ribosomal subunit protein uS14A (101 aa).

Positions 31–59 (IRSPASSPEQRVAAQSELNRQPRDASAVR) are disordered.

The protein belongs to the universal ribosomal protein uS14 family. Part of the 30S ribosomal subunit. Contacts proteins S3 and S10.

In terms of biological role, binds 16S rRNA, required for the assembly of 30S particles and may also be responsible for determining the conformation of the 16S rRNA at the A site. The polypeptide is Small ribosomal subunit protein uS14A (Mycobacteroides abscessus (strain ATCC 19977 / DSM 44196 / CCUG 20993 / CIP 104536 / JCM 13569 / NCTC 13031 / TMC 1543 / L948) (Mycobacterium abscessus)).